Consider the following 220-residue polypeptide: MASRVDETTVPSYYYYVDPETTYTYQQPNPLQDLISVYGLDDISRQVARTNLDGTKAVKLRKSYKNQIADLSGKFSTIPTRENGKGGQIAHILFQNNPDMMIQPPQQGQNMSEQQWREQLRNRDIALFQPPNFDWDLCSSVLSQFERSYPSEFANQNQGGAQAPFDIDDLAFDLDGTGKSQSGSNSGNNSKKRKNKSSGSSMATPTHSDSHEDMKRRRLE.

A disordered region spans residues 171 to 220; it reads AFDLDGTGKSQSGSNSGNNSKKRKNKSSGSSMATPTHSDSHEDMKRRRLE. Over residues 178–189 the composition is skewed to low complexity; the sequence is GKSQSGSNSGNN. Residues 208-220 are compositionally biased toward basic and acidic residues; it reads SDSHEDMKRRRLE.

It belongs to the Mediator complex subunit 19 family. Component of the Mediator complex, which is composed of at least 21 subunits that form three structurally distinct submodules. The Mediator head module contains MED6, MED8, MED11, SRB4/MED17, SRB5/MED18, ROX3/MED19, SRB2/MED20 and SRB6/MED22, the middle module contains MED1, MED4, NUT1/MED5, MED7, CSE2/MED9, NUT2/MED10, SRB7/MED21 and SOH1/MED31, and the tail module contains MED2, PGD1/MED3, RGR1/MED14, GAL11/MED15 and SIN4/MED16. The head and the middle modules interact directly with RNA polymerase II, whereas the elongated tail module interacts with gene-specific regulatory proteins.

It is found in the nucleus. Component of the Mediator complex, a coactivator involved in the regulated transcription of nearly all RNA polymerase II-dependent genes. Mediator functions as a bridge to convey information from gene-specific regulatory proteins to the basal RNA polymerase II transcription machinery. The Mediator complex, having a compact conformation in its free form, is recruited to promoters by direct interactions with regulatory proteins and serves for the assembly of a functional preinitiation complex with RNA polymerase II and the general transcription factors. The Mediator complex unfolds to an extended conformation and partially surrounds RNA polymerase II, specifically interacting with the unphosphorylated form of the C-terminal domain (CTD) of RNA polymerase II. The Mediator complex dissociates from the RNA polymerase II holoenzyme and stays at the promoter when transcriptional elongation begins. In Saccharomyces cerevisiae (strain ATCC 204508 / S288c) (Baker's yeast), this protein is Mediator of RNA polymerase II transcription subunit 19 (ROX3).